A 381-amino-acid chain; its full sequence is Chaperone protein DnaJ (381 aa).

In terms of domain architecture, J spans Asp4 to Gly69. The segment at Gly139–Thr221 adopts a CR-type zinc-finger fold. The Zn(2+) site is built by Cys152, Cys155, Cys169, Cys172, Cys195, Cys198, Cys209, and Cys212. 4 CXXCXGXG motif repeats span residues Cys152 to Gly159, Cys169 to Gly176, Cys195 to Gly202, and Cys209 to Gly216.

Belongs to the DnaJ family. In terms of assembly, homodimer. Zn(2+) is required as a cofactor.

It is found in the cytoplasm. Its function is as follows. Participates actively in the response to hyperosmotic and heat shock by preventing the aggregation of stress-denatured proteins and by disaggregating proteins, also in an autonomous, DnaK-independent fashion. Unfolded proteins bind initially to DnaJ; upon interaction with the DnaJ-bound protein, DnaK hydrolyzes its bound ATP, resulting in the formation of a stable complex. GrpE releases ADP from DnaK; ATP binding to DnaK triggers the release of the substrate protein, thus completing the reaction cycle. Several rounds of ATP-dependent interactions between DnaJ, DnaK and GrpE are required for fully efficient folding. Also involved, together with DnaK and GrpE, in the DNA replication of plasmids through activation of initiation proteins. This is Chaperone protein DnaJ from Carboxydothermus hydrogenoformans (strain ATCC BAA-161 / DSM 6008 / Z-2901).